Here is a 346-residue protein sequence, read N- to C-terminus: Bifunctional phosphatase IMPL2, chloroplastic (346 aa).

A chloroplast-targeting transit peptide spans methionine 1–methionine 61. Residues glutamate 147, aspartate 165, and aspartate 168 each coordinate Mg(2+). Glutamate 147 is a substrate binding site. Residues isoleucine 167–threonine 170, glycine 263–aspartate 265, glutamate 282, and aspartate 289 each bind substrate. Position 289 (aspartate 289) interacts with Mg(2+).

Belongs to the inositol monophosphatase superfamily. It depends on Mg(2+) as a cofactor. In terms of tissue distribution, ubiquitous. High expression in roots. Expressed in pistil and seed endosperm.

The protein localises to the plastid. The protein resides in the chloroplast. It catalyses the reaction a myo-inositol phosphate + H2O = myo-inositol + phosphate. The enzyme catalyses L-histidinol phosphate + H2O = L-histidinol + phosphate. The catalysed reaction is beta-L-galactose 1-phosphate + H2O = L-galactose + phosphate. Its pathway is amino-acid biosynthesis; L-histidine biosynthesis; L-histidine from 5-phospho-alpha-D-ribose 1-diphosphate: step 8/9. It participates in polyol metabolism; myo-inositol biosynthesis; myo-inositol from D-glucose 6-phosphate: step 2/2. Functionally, phosphatase required for histidine production. Also acts on L-galactose 1-phosphate (L-Gal 1-P), D-myoinositol 3-phosphate (D-Ins 3-P) and D-myoinositol 1-phosphate (D-Ins 1-P). This chain is Bifunctional phosphatase IMPL2, chloroplastic (HISN7), found in Arabidopsis thaliana (Mouse-ear cress).